Reading from the N-terminus, the 1216-residue chain is Sodium/potassium/calcium exchanger 1 (1216 aa).

Over 1 to 446 (MGKLIRMGAQ…DLFSVEERRQ (446 aa)) the chain is Extracellular. A disordered region spans residues 94–196 (EATAGRDGTP…KYSPSPLGRM (103 aa)). 2 stretches are compositionally biased toward polar residues: residues 110–135 (NTPS…TPTG) and 144–166 (SATP…SYTR). Residues Asn-290 and Asn-303 are each glycosylated (N-linked (GlcNAc...) asparagine). A helical membrane pass occupies residues 447–467 (GWVVLHIFGMMYVFVALAIVC). Residues 468–491 (DEYFVPALGVITDKLQISEDVAGA) lie on the Cytoplasmic side of the membrane. The stretch at 488-528 (VAGATFMAAGGSAPELFTSLIGVFISHSNVGIGTIVGSAVF) is one Alpha-1 repeat. The chain crosses the membrane as a helical span at residues 492–512 (TFMAAGGSAPELFTSLIGVFI). Over 513–518 (SHSNVG) the chain is Extracellular. Residues 519-539 (IGTIVGSAVFNILFVIGTCAL) form a helical membrane-spanning segment. Residues 540 to 557 (FSREILNLTWWPLFRDIT) lie on the Cytoplasmic side of the membrane. A helical membrane pass occupies residues 558-578 (FYIFDLMMLILFFLDSLIAWW). A topological domain (extracellular) is located at residue Glu-579. Residues 580–600 (SVLLLLAYAFYVFTMKWNQQL) traverse the membrane as a helical segment. Over 601–1024 (ELWVKEQLNK…SLEWPETRRK (424 aa)) the chain is Cytoplasmic. A Phosphoserine modification is found at Ser-652. A disordered region spans residues 677-1018 (GEARPSKDKE…ENEQPLSLEW (342 aa)). Residues 702-712 (AESKPEEEPAK) are compositionally biased toward basic and acidic residues. Position 717 is a phosphothreonine (Thr-717). The stretch at 796-811 (DEDEGEIQAEGGEVKG) is one 1; approximate repeat. The 8 X 17 AA tandem repeats of D-E-D-E-G-E-I-Q-A-G-E-[GA]-G-E-V-[EK]-G stretch occupies residues 796–928 (DEDEGEIQAE…QAGEAGEVEG (133 aa)). Repeat copies occupy residues 812-828 (DEDE…EVEG), 829-845 (DEDE…EVEG), 846-862 (DEDE…EVEG), 863-879 (DEDE…EVEG), 880-896 (DEDE…EVEG), and 897-913 (DEDE…EVKG). Acidic residues-rich tracts occupy residues 824–834 (GEVEGDEDEGE), 841–851 (GEVEGDEDEGE), 858–868 (GEVEGDEDEGE), 875–885 (GEVEGDEDEGE), 892–902 (GEVEGDEDEGE), 924–941 (GEVE…DEGE), and 981–1011 (GDSE…EENE). One copy of the 8; approximate repeat lies at 914-928 (DEGEIQAGEAGEVEG). The helical transmembrane segment at 1025 to 1045 (QAIYLFLLPIVFPLWLTVPDV) threads the bilayer. The Extracellular portion of the chain corresponds to 1046–1052 (RRLEAKK). The helical transmembrane segment at 1053 to 1073 (FFVITFLGSILWIAMFSYLMV) threads the bilayer. Residues 1074 to 1088 (WWAHQVGETIGISEE) are Cytoplasmic-facing. Residues 1089–1109 (IMGLTILAAGTSIPDLITSVI) form a helical membrane-spanning segment. Residues 1096–1127 (AAGTSIPDLITSVIVARKGLGDMAVSSSVGSN) form an Alpha-2 repeat. The Extracellular segment spans residues 1110-1127 (VARKGLGDMAVSSSVGSN). Residues 1128–1148 (IFDITVGLPLPWMLFSLINGL) traverse the membrane as a helical segment. The Cytoplasmic portion of the chain corresponds to 1149–1157 (QPVAVSSNG). Residues 1158 to 1178 (LFCAIVLLFLMLLFVISSIAL) form a helical membrane-spanning segment. Residues 1179 to 1185 (CKWRMNK) are Extracellular-facing. A helical transmembrane segment spans residues 1186-1206 (ILGFTMFLLYFVFLIISVMLE). Residues 1207–1216 (DRIISCPVSV) lie on the Cytoplasmic side of the membrane.

The protein belongs to the Ca(2+):cation antiporter (CaCA) (TC 2.A.19) family. SLC24A subfamily. Post-translationally, the uncleaved signal sequence is required for efficient membrane targeting and proper membrane integration and topology. In terms of processing, glycosylated. In terms of tissue distribution, retina.

It is found in the cell membrane. The catalysed reaction is Ca(2+)(out) + K(+)(out) + 4 Na(+)(in) = Ca(2+)(in) + K(+)(in) + 4 Na(+)(out). In terms of biological role, calcium, potassium:sodium antiporter that transports 1 Ca(2+) and 1 K(+) in exchange for 4 Na(+). Critical component of the visual transduction cascade, controlling the calcium concentration of outer segments during light and darkness. Light causes a rapid lowering of cytosolic free calcium in the outer segment of both retinal rod and cone photoreceptors and the light-induced lowering of calcium is caused by extrusion via this protein which plays a key role in the process of light adaptation. The chain is Sodium/potassium/calcium exchanger 1 (SLC24A1) from Bos taurus (Bovine).